Consider the following 107-residue polypeptide: Neuroparsin-A (107 aa).

An N-terminal signal peptide occupies residues 1–22 (MKATAALVAATLLLAVTLFHRA). The propeptide occupies 23 to 24 (ER).

As to quaternary structure, homodimer; disulfide-linked.

Functionally, neurosparins are multifunctional neurohormones: they inhibit the effects of juvenile hormone, stimulate fluid reabsorption of isolated recta and induces an increase in hemolymph lipid and trehalose levels. The polypeptide is Neuroparsin-A (Locusta migratoria (Migratory locust)).